The primary structure comprises 976 residues: MSVNDREDSSADLYNGQLLRDIKEVSKALYLTNGPQRPVLSLSPPVRSQSVSRTTEIGLVLSNKKKKSLVPWNWKKPLNAIAHFGQRRFDVCFLLHVHSIEGLPLNLDGTKLVVQWKRKDEVMTTQPSKVLQGTAEFEETLTHRCSVYGSKHGPHRSAKYQVKLFLIYVSPVDAPWLVLGKHWIDLTRILPLSLEEMEGTRSTRKWNTSFKLSGLAESAVLNLSFDYSVVTSSVCDSTSKNVMLRRVGSVPSMDHRSPPLDDGKVVNEVSPSLSLNLSQSIDFLYEKLGEQNPQRSTGTEVELGLETDKQAADSDDSGKGVETFQQERSGLEESNDPNTESSRIEIIDVHEILKDEDESVFEETYFIDQLSVAALKSEPSNLLPKHSVDGTPKSTFSSQVISESSESKSPSAMDDSTEKENFLEVKSSYKAAKISMTSLSLDDITESVANDFLNMLELEECSYVYTSDGEPTSPRESLLREFEKEAFASGNFLLDLNGEAEYVSDIDEKSNDFSFSASSLDVGENKREGKSQLLIDRRKAKVLEDLETETLLRECDFDDNSFDNSLCVCSDGFGSPIELPVDKGLDLLPLGDNIGPSVWTKGGGCIRSMNHLLFRESKEASQLIMQVSVPVVLVSELGSDILEILQIFAASGIEGLCSEVNALIPLEDIMGKTIHEVVDVTKFKRTGQDCSDKSKGVVVQKPPGQLHLCSSNEEFGSSMCPSNVPLEDVTSLAIDEIYILSIEGLKIQCSMSDQDPPSGIAPKPMDQSDALELIRFSLTLDEWLRLDQGMLENKDQDLASNGKGHTLRNKLTLALQVLLRDPSLNNEPIGASMLALIQVERSLDSPNSSLCSLAQEGRNKESFGYDTQLWRITEIGLAGLKIEPGADHPWCTKSQQQSGSRWLLANGTDKTIKCQASESKVIIVSNVQATRKRLDTLWSIISDRHHQEGDLSNSAASVPFTRNLDVIFSNEVTERS.

In terms of domain architecture, C2 NT-type spans 81–229 (IAHFGQRRFD…VLNLSFDYSV (149 aa)). Basic and acidic residues predominate over residues 309–319 (KQAADSDDSGK). Disordered stretches follow at residues 309–343 (KQAA…ESSR) and 381–419 (NLLP…STEK). Residues 394–414 (STFSSQVISESSESKSPSAMD) are compositionally biased toward low complexity.

Its function is as follows. Seems not necessary for chloroplast and nuclear photorelocation movements. The chain is Protein PLASTID MOVEMENT IMPAIRED 1-RELATED 2 from Arabidopsis thaliana (Mouse-ear cress).